Consider the following 231-residue polypeptide: Probable glutathione S-transferase (231 aa).

In terms of domain architecture, GST N-terminal spans 4–96 (PNFELYGYFR…YLEEALPTNA (93 aa)). Glutathione contacts are provided by residues S14, Q43, V57, 80–81 (QS), Q124, and 128–130 (NLK). The GST C-terminal domain maps to 105–227 (NPVARAHVRT…HWQKQEDTPE (123 aa)).

The protein belongs to the GST superfamily. Zeta family. As to quaternary structure, homodimer.

It carries out the reaction RX + glutathione = an S-substituted glutathione + a halide anion + H(+). Functionally, probable glutathione S-transferase. The protein is Probable glutathione S-transferase of Coccidioides immitis (strain RS) (Valley fever fungus).